Here is a 236-residue protein sequence, read N- to C-terminus: 3-deoxy-D-manno-octulosonic acid kinase (236 aa).

Asp-167 is a catalytic residue.

This sequence belongs to the protein kinase superfamily. KdkA/RfaP family.

It localises to the cell inner membrane. It catalyses the reaction an alpha-Kdo-(2-&gt;6)-lipid IVA + ATP = a 4-O-phospho-alpha-Kdo-(2-&gt;6)-lipid IVA + ADP + H(+). It functions in the pathway bacterial outer membrane biogenesis; LPS core biosynthesis. In terms of biological role, catalyzes the ATP-dependent phosphorylation of the 3-deoxy-D-manno-octulosonic acid (Kdo) residue in Kdo-lipid IV(A) at the 4-OH position. This chain is 3-deoxy-D-manno-octulosonic acid kinase, found in Vibrio vulnificus (strain YJ016).